Consider the following 252-residue polypeptide: Triosephosphate isomerase (252 aa).

9-11 (NWK) is a substrate binding site. Catalysis depends on His-95, which acts as the Electrophile. The Proton acceptor role is filled by Glu-167. Substrate contacts are provided by residues Gly-173, Ser-211, and 232-233 (GG).

It belongs to the triosephosphate isomerase family. As to quaternary structure, homodimer.

The protein localises to the cytoplasm. It catalyses the reaction D-glyceraldehyde 3-phosphate = dihydroxyacetone phosphate. It functions in the pathway carbohydrate biosynthesis; gluconeogenesis. It participates in carbohydrate degradation; glycolysis; D-glyceraldehyde 3-phosphate from glycerone phosphate: step 1/1. In terms of biological role, involved in the gluconeogenesis. Catalyzes stereospecifically the conversion of dihydroxyacetone phosphate (DHAP) to D-glyceraldehyde-3-phosphate (G3P). This Marinobacter nauticus (strain ATCC 700491 / DSM 11845 / VT8) (Marinobacter aquaeolei) protein is Triosephosphate isomerase.